The sequence spans 617 residues: mRNA export factor MEX67 (617 aa).

Gly residues predominate over residues 1-10 (MSYRGRGGGY). A disordered region spans residues 1–24 (MSYRGRGGGYNNNRGQFSSGPHQH). LRR repeat units follow at residues 185–206 (DVDS…TSMA), 211–232 (KLQN…ETWR), and 237–258 (FLRE…AEIQ). In terms of domain architecture, NTF2 spans 309–499 (LATNFIANYL…MIVASDTLLI (191 aa)). 2 disordered regions span residues 442–469 (EVDG…HKRI) and 513–554 (LPSN…TTAD). Low complexity-rich tracts occupy residues 445–459 (GSAS…GGSR) and 526–542 (ATST…TTPQ). A TAP-C domain is found at 565–617 (QIQQELLVKILLETKLNINYGIMLCEQSNWDYQQASVNFKNSAASLPSDAFVQ).

It belongs to the NXF family. As to quaternary structure, interacts with nucleoporin complex protein MTR2.

It localises to the nucleus. Its subcellular location is the cytoplasm. Involved in the export of mRNA from the nucleus to the cytoplasm. In Candida albicans (strain SC5314 / ATCC MYA-2876) (Yeast), this protein is mRNA export factor MEX67.